A 27-amino-acid chain; its full sequence is GGGKDYRVEIVDKHNXLRRSVXXTARN.

This sequence belongs to the CRISP family. Post-translationally, contains 8 disulfide bonds. In terms of tissue distribution, expressed by the venom gland.

The protein localises to the secreted. Its function is as follows. Blocks contraction of smooth muscle elicited by high potassium-induced depolarization, but does not block caffeine-stimulated contraction. May target voltage-gated calcium channels on smooth muscle. This is Cysteine-rich venom protein tropirin from Tropidechis carinatus (Australian rough-scaled snake).